The primary structure comprises 248 residues: Probable aquaporin TIP2-2 (248 aa).

The next 2 membrane-spanning stretches (helical) occupy residues alanine 21 to isoleucine 41 and alanine 55 to glycine 75. The short motif at asparagine 84–alanine 86 is the NPA 1 element. 3 helical membrane-spanning segments follow: residues valine 87–glutamine 109, leucine 133–valine 153, and leucine 168–glycine 188. Positions asparagine 196–alanine 198 match the NPA 2 motif. A helical transmembrane segment spans residues tyrosine 210–valine 230.

The protein belongs to the MIP/aquaporin (TC 1.A.8) family. TIP (TC 1.A.8.10) subfamily. In terms of tissue distribution, expressed in roots and leaves.

It localises to the vacuole membrane. In terms of biological role, aquaporins facilitate the transport of water and small neutral solutes across cell membranes. May be involved in transport from the vacuolar compartment to the cytoplasm. This chain is Probable aquaporin TIP2-2 (TIP2-2), found in Oryza sativa subsp. japonica (Rice).